The primary structure comprises 596 residues: Probable lysosomal cobalamin transporter (596 aa).

10 consecutive transmembrane segments (helical) span residues 13–33, 45–65, 99–119, 150–170, 201–221, 318–338, 353–373, 381–401, 425–445, and 512–532; these read IWVA…ITTF, VSIV…LLPV, VVYY…IPFA, LGFV…PAAG, LLIT…LALL, LLGG…MLIT, GYIL…VQSA, ILMA…IATI, IATV…AMIV, and VFGA…MVVF. Residue Asn543 is glycosylated (N-linked (GlcNAc...) asparagine). Residues 576-596 are disordered; that stretch reads GRAKNRNGYGTGGGEGSNGRG. Residues 584 to 596 are compositionally biased toward gly residues; sequence YGTGGGEGSNGRG.

This sequence belongs to the LIMR family. LMBRD1 subfamily.

Its subcellular location is the lysosome membrane. In terms of biological role, probable lysosomal cobalamin transporter. Required to export cobalamin from lysosomes allowing its conversion to cofactors. This is Probable lysosomal cobalamin transporter from Podospora anserina (strain S / ATCC MYA-4624 / DSM 980 / FGSC 10383) (Pleurage anserina).